Consider the following 231-residue polypeptide: D-allulose-6-phosphate 3-epimerase (231 aa).

Position 6 (Ser6) interacts with substrate. Residues His30, Asp32, and His63 each coordinate a divalent metal cation. Asp32 functions as the Proton acceptor in the catalytic mechanism. Substrate is bound by residues His63, 140–143, 173–175, and 195–197; these read GFAG, DGS, and GTS. Asp173 is an a divalent metal cation binding site. The Proton donor role is filled by Asp173.

This sequence belongs to the ribulose-phosphate 3-epimerase family. AlsE subfamily. Homohexamer. Trimer of dimers. The cofactor is Co(2+). Mn(2+) serves as cofactor. It depends on Zn(2+) as a cofactor.

It carries out the reaction D-allulose 6-phosphate = keto-D-fructose 6-phosphate. It participates in carbohydrate degradation; D-allose degradation. In terms of biological role, catalyzes the reversible epimerization of D-allulose 6-phosphate to D-fructose 6-phosphate. Can also catalyze with lower efficiency the reversible epimerization of D-ribulose 5-phosphate to D-xylulose 5-phosphate. The polypeptide is D-allulose-6-phosphate 3-epimerase (Escherichia coli (strain K12)).